The chain runs to 202 residues: Outer-membrane lipoprotein carrier protein (202 aa).

An N-terminal signal peptide occupies residues 1–18; that stretch reads MNRLFLILLLIFSHEVFS.

It belongs to the LolA family. In terms of assembly, monomer.

It is found in the periplasm. Participates in the translocation of lipoproteins from the inner membrane to the outer membrane. Only forms a complex with a lipoprotein if the residue after the N-terminal Cys is not an aspartate (The Asp acts as a targeting signal to indicate that the lipoprotein should stay in the inner membrane). The sequence is that of Outer-membrane lipoprotein carrier protein from Legionella pneumophila (strain Lens).